The chain runs to 191 residues: Molybdenum cofactor guanylyltransferase (191 aa).

Residues 11-13 (LCG), Lys-23, Asp-66, and Asp-97 contribute to the GTP site. Asp-97 provides a ligand contact to Mg(2+).

The protein belongs to the MobA family. Monomer. Requires Mg(2+) as cofactor.

It is found in the cytoplasm. It carries out the reaction Mo-molybdopterin + GTP + H(+) = Mo-molybdopterin guanine dinucleotide + diphosphate. Transfers a GMP moiety from GTP to Mo-molybdopterin (Mo-MPT) cofactor (Moco or molybdenum cofactor) to form Mo-molybdopterin guanine dinucleotide (Mo-MGD) cofactor. The polypeptide is Molybdenum cofactor guanylyltransferase (Campylobacter jejuni subsp. jejuni serotype O:2 (strain ATCC 700819 / NCTC 11168)).